Reading from the N-terminus, the 450-residue chain is DNA primase DnaG (450 aa).

A Toprim domain is found at 199–273 (DSIIVVEGRA…DVDYVARAPE (75 aa)). Mg(2+) is bound by residues Glu205, Asp247, and Asp249. Basic and acidic residues predominate over residues 320-348 (APSKEVKPAPKHEPKPQPVEQKPREEKII). The tract at residues 320-350 (APSKEVKPAPKHEPKPQPVEQKPREEKIIRP) is disordered.

It belongs to the archaeal DnaG primase family. As to quaternary structure, forms a ternary complex with MCM helicase and DNA. Component of the archaeal exosome complex. The cofactor is Mg(2+).

The enzyme catalyses ssDNA + n NTP = ssDNA/pppN(pN)n-1 hybrid + (n-1) diphosphate.. In terms of biological role, RNA polymerase that catalyzes the synthesis of short RNA molecules used as primers for DNA polymerase during DNA replication. Also part of the exosome, which is a complex involved in RNA degradation. Acts as a poly(A)-binding protein that enhances the interaction between heteromeric, adenine-rich transcripts and the exosome. In Thermococcus gammatolerans (strain DSM 15229 / JCM 11827 / EJ3), this protein is DNA primase DnaG.